Here is a 297-residue protein sequence, read N- to C-terminus: Urease accessory protein UreD 2 (297 aa).

Belongs to the UreD family. As to quaternary structure, ureD, UreF and UreG form a complex that acts as a GTP-hydrolysis-dependent molecular chaperone, activating the urease apoprotein by helping to assemble the nickel containing metallocenter of UreC. The UreE protein probably delivers the nickel.

The protein localises to the cytoplasm. In terms of biological role, required for maturation of urease via the functional incorporation of the urease nickel metallocenter. This Methylorubrum populi (strain ATCC BAA-705 / NCIMB 13946 / BJ001) (Methylobacterium populi) protein is Urease accessory protein UreD 2.